Reading from the N-terminus, the 465-residue chain is A-type ATP synthase subunit B (465 aa).

This sequence belongs to the ATPase alpha/beta chains family. In terms of assembly, has multiple subunits with at least A(3), B(3), C, D, E, F, H, I and proteolipid K(x).

It localises to the cell membrane. In terms of biological role, component of the A-type ATP synthase that produces ATP from ADP in the presence of a proton gradient across the membrane. The B chain is a regulatory subunit. The chain is A-type ATP synthase subunit B from Pyrococcus horikoshii (strain ATCC 700860 / DSM 12428 / JCM 9974 / NBRC 100139 / OT-3).